The following is a 171-amino-acid chain: Ribosome maturation factor RimM (171 aa).

A PRC barrel domain is found at 98-170 (EGEFYLHQII…AVQVSVPEGL (73 aa)).

Belongs to the RimM family. Binds ribosomal protein uS19.

The protein resides in the cytoplasm. An accessory protein needed during the final step in the assembly of 30S ribosomal subunit, possibly for assembly of the head region. Essential for efficient processing of 16S rRNA. May be needed both before and after RbfA during the maturation of 16S rRNA. It has affinity for free ribosomal 30S subunits but not for 70S ribosomes. In Pediococcus pentosaceus (strain ATCC 25745 / CCUG 21536 / LMG 10740 / 183-1w), this protein is Ribosome maturation factor RimM.